A 97-amino-acid chain; its full sequence is Theromacin (97 aa).

Residues 1–22 (MELKSGLSILLCFGICIAVINA) form the signal peptide. Intrachain disulfides connect cysteine 24/cysteine 31, cysteine 46/cysteine 50, cysteine 53/cysteine 95, cysteine 61/cysteine 69, and cysteine 79/cysteine 81.

In terms of tissue distribution, coelomic liquid (at protein level). Expressed in large fat cells in contact with coelomic cavities, in intestinal epithelia and at the epidermis level.

It is found in the secreted. Has a bactericidal activity. Active against M.luteus. No activity toward E.coli and F.oxysporum. The protein is Theromacin of Theromyzon tessulatum (Duck leech).